A 74-amino-acid polypeptide reads, in one-letter code: NAD(P)H-quinone oxidoreductase subunit L (74 aa).

2 helical membrane passes run leucine 5–alanine 25 and alanine 43–leucine 63.

It belongs to the complex I NdhL subunit family. NDH-1 can be composed of about 15 different subunits; different subcomplexes with different compositions have been identified which probably have different functions.

The protein localises to the cellular thylakoid membrane. The enzyme catalyses a plastoquinone + NADH + (n+1) H(+)(in) = a plastoquinol + NAD(+) + n H(+)(out). It catalyses the reaction a plastoquinone + NADPH + (n+1) H(+)(in) = a plastoquinol + NADP(+) + n H(+)(out). Functionally, NDH-1 shuttles electrons from an unknown electron donor, via FMN and iron-sulfur (Fe-S) centers, to quinones in the respiratory and/or the photosynthetic chain. The immediate electron acceptor for the enzyme in this species is believed to be plastoquinone. Couples the redox reaction to proton translocation, and thus conserves the redox energy in a proton gradient. Cyanobacterial NDH-1 also plays a role in inorganic carbon-concentration. This Synechococcus elongatus (strain ATCC 33912 / PCC 7942 / FACHB-805) (Anacystis nidulans R2) protein is NAD(P)H-quinone oxidoreductase subunit L.